Here is a 460-residue protein sequence, read N- to C-terminus: Nucleosome assembly protein 1-like 2 (460 aa).

The span at 1-11 (MAESVDHKELS) shows a compositional bias: basic and acidic residues. Disordered regions lie at residues 1–87 (MAES…DSDR) and 213–238 (DEEE…EDPK). Over residues 213 to 223 (DEEEEEEEDDS) the composition is skewed to acidic residues. Positions 346-352 (IKKKQRH) match the Nuclear localization signal motif.

This sequence belongs to the nucleosome assembly protein (NAP) family. In terms of tissue distribution, brain, specifically expressed in neurons.

The protein localises to the nucleus. In terms of biological role, acidic protein which may be involved in interactions with other proteins or DNA. The polypeptide is Nucleosome assembly protein 1-like 2 (Nap1l2) (Mus musculus (Mouse)).